A 211-amino-acid chain; its full sequence is ATP-dependent Clp protease proteolytic subunit (211 aa).

Ser-106 functions as the Nucleophile in the catalytic mechanism. Residue His-131 is part of the active site.

The protein belongs to the peptidase S14 family. Fourteen ClpP subunits assemble into 2 heptameric rings which stack back to back to give a disk-like structure with a central cavity, resembling the structure of eukaryotic proteasomes.

Its subcellular location is the cytoplasm. It catalyses the reaction Hydrolysis of proteins to small peptides in the presence of ATP and magnesium. alpha-casein is the usual test substrate. In the absence of ATP, only oligopeptides shorter than five residues are hydrolyzed (such as succinyl-Leu-Tyr-|-NHMec, and Leu-Tyr-Leu-|-Tyr-Trp, in which cleavage of the -Tyr-|-Leu- and -Tyr-|-Trp bonds also occurs).. In terms of biological role, cleaves peptides in various proteins in a process that requires ATP hydrolysis. Has a chymotrypsin-like activity. Plays a major role in the degradation of misfolded proteins. This chain is ATP-dependent Clp protease proteolytic subunit, found in Maricaulis maris (strain MCS10) (Caulobacter maris).